A 349-amino-acid polypeptide reads, in one-letter code: MAAITNNPDKEKALGLVLNQIERNFGKGSIMRLGDAARMKVETISTGALTLDLALGGGLPMGRVVEIYGPESSGKTTLALHAIAEVQKAGGVAAFVDAEHALDPTYSAALGVDINNLLVAQPDTGESALEIVDQLVRSAAVDVVVIDSVAALVPRAEIEGEMGDTQVGLQARLMSKALRKIAGNIGKSGCVVIFLNQLRQKIGITYGSPEVTTGGTALKFYASVRLDIRRIQTLKKGSEGEYGIRAKVKVAKNKVAPPFRIAEFDIIFGQGISRMGCMLDLAEQSDVVLRKGAWYSYNGDNISQGRDNAVKYLEENPKIAETIEQQVREKLELGSLSFAISQGDGEEEE.

Position 69 to 76 (69 to 76 (GPESSGKT)) interacts with ATP.

The protein belongs to the RecA family.

It localises to the cytoplasm. Its function is as follows. Can catalyze the hydrolysis of ATP in the presence of single-stranded DNA, the ATP-dependent uptake of single-stranded DNA by duplex DNA, and the ATP-dependent hybridization of homologous single-stranded DNAs. It interacts with LexA causing its activation and leading to its autocatalytic cleavage. This is Protein RecA from Crocosphaera subtropica (strain ATCC 51142 / BH68) (Cyanothece sp. (strain ATCC 51142)).